Reading from the N-terminus, the 447-residue chain is Elongation factor 1-alpha (447 aa).

The 226-residue stretch at 5-230 (KFHINIVVIG…DQINDAKRPS (226 aa)) folds into the tr-type G domain. The segment at 14–21 (GHVDSGKS) is G1. Position 14–21 (14–21 (GHVDSGKS)) interacts with GTP. Lys55 is modified (N6,N6-dimethyllysine). Residues 70–74 (GITID) are G2. Lys79 is subject to N6,N6,N6-trimethyllysine. Residues 91–94 (DAPG) form a G3 region. GTP is bound by residues 91–95 (DAPGH) and 153–156 (NKMD). Residues 153–156 (NKMD) are G4. Lys187 is modified (N6,N6,N6-trimethyllysine). The G5 stretch occupies residues 194–196 (SGF). The residue at position 261 (Lys261) is an N6-methyllysine. Glu289 bears the 5-glutamyl glycerylphosphorylethanolamine mark. Position 306 is an N6,N6,N6-trimethyllysine (Lys306). Glu362 carries the 5-glutamyl glycerylphosphorylethanolamine modification. Lys396 is subject to N6,N6,N6-trimethyllysine.

Belongs to the TRAFAC class translation factor GTPase superfamily. Classic translation factor GTPase family. EF-Tu/EF-1A subfamily. In terms of tissue distribution, was detected in all tissues examined but was most abundant in roots and salt-adapted cultured cells.

The protein localises to the cytoplasm. Functionally, this protein promotes the GTP-dependent binding of aminoacyl-tRNA to the A-site of ribosomes during protein biosynthesis. This is Elongation factor 1-alpha from Nicotiana tabacum (Common tobacco).